Reading from the N-terminus, the 280-residue chain is uncharacterized protein (280 aa).

The N-terminal stretch at Met-1 to Ala-21 is a signal peptide.

The protein to M.leprae ML2432 and S.coelicolor SCO3347.

This is an uncharacterized protein from Mycobacterium tuberculosis (strain CDC 1551 / Oshkosh).